We begin with the raw amino-acid sequence, 532 residues long: KICSTOR complex protein ITFG2 (532 aa).

One copy of the FG-GAP 1; atypical repeat lies at 19–48; it reads FPHAICLGDVDNDTLNELVVGDTSGKLSVY. At Ser104 the chain carries Phosphoserine. The stretch at 126–155 is one FG-GAP 2; atypical repeat; it reads NTKVMLISDIDGDGRCELVVGYTDRVVRAF. The tract at residues 248-271 is disordered; that stretch reads PHPQQERLHSPHRQHQASHSPDSS.

Part of the KICSTOR complex composed of KPTN, ITFG2, KICS2 and SZT2. SZT2 probably serves as a link between the other three proteins in the KICSTOR complex and may mediate the direct interaction with the GATOR complex via GATOR1. The KICSTOR complex interacts directly with the GATOR1 complex and most probably indirectly with the GATOR2 complex in an amino acid-independent manner.

Its subcellular location is the lysosome membrane. Its function is as follows. As part of the KICSTOR complex functions in the amino acid-sensing branch of the TORC1 signaling pathway. Recruits, in an amino acid-independent manner, the GATOR1 complex to the lysosomal membranes and allows its interaction with GATOR2 and the RAG GTPases. Functions upstream of the RAG GTPases and is required to negatively regulate mTORC1 signaling in absence of amino acids. In absence of the KICSTOR complex mTORC1 is constitutively localized to the lysosome and activated. The KICSTOR complex is also probably involved in the regulation of mTORC1 by glucose. This Bos taurus (Bovine) protein is KICSTOR complex protein ITFG2.